We begin with the raw amino-acid sequence, 182 residues long: MKGWGWLALLLGALLGTAWARRSQDLHCGACRALVDELEWEIAQVDPKKTIQMGSFRINPDGSQSVVEVPYARSEAHLTELLEEICDRMKEYGEQIDPSTHRKNYVRVVGRNGESSELDLQGIRIDSDISGTLKFACESIVEEYEDELIEFFSREADNVKDKLCSKRTDLCDHALHISHDEL.

The signal sequence occupies residues 1-20; sequence MKGWGWLALLLGALLGTAWA. Residues 24–175 form the Saposin B-type domain; it reads QDLHCGACRA…KRTDLCDHAL (152 aa). 3 disulfides stabilise this stretch: cysteine 28–cysteine 171, cysteine 31–cysteine 164, and cysteine 86–cysteine 137. The residue at position 115 (serine 115) is a Phosphoserine. Residues 179 to 182 carry the Prevents secretion from ER motif; sequence HDEL.

This sequence belongs to the canopy family. In terms of assembly, interacts with MYLIP/MIR. In terms of tissue distribution, expressed in different tissues. Highest levels are detected in adult placenta, liver and pancreas.

It localises to the endoplasmic reticulum. Its function is as follows. Positive regulator of neurite outgrowth by stabilizing myosin regulatory light chain (MRLC). It prevents MIR-mediated MRLC ubiquitination and its subsequent proteasomal degradation. The chain is Protein canopy homolog 2 (CNPY2) from Homo sapiens (Human).